Here is a 199-residue protein sequence, read N- to C-terminus: GTP cyclohydrolase-2 (199 aa).

52–56 contributes to the GTP binding site; sequence RMHSE. Positions 57, 68, and 70 each coordinate Zn(2+). Residues Q73, 94–96, and T116 each bind GTP; that span reads EGR. The active-site Proton acceptor is the D128. R130 functions as the Nucleophile in the catalytic mechanism. GTP-binding residues include T151 and K156.

This sequence belongs to the GTP cyclohydrolase II family. Requires Zn(2+) as cofactor.

The catalysed reaction is GTP + 4 H2O = 2,5-diamino-6-hydroxy-4-(5-phosphoribosylamino)-pyrimidine + formate + 2 phosphate + 3 H(+). It functions in the pathway cofactor biosynthesis; riboflavin biosynthesis; 5-amino-6-(D-ribitylamino)uracil from GTP: step 1/4. In terms of biological role, catalyzes the conversion of GTP to 2,5-diamino-6-ribosylamino-4(3H)-pyrimidinone 5'-phosphate (DARP), formate and pyrophosphate. The sequence is that of GTP cyclohydrolase-2 from Aliivibrio salmonicida (strain LFI1238) (Vibrio salmonicida (strain LFI1238)).